The following is a 771-amino-acid chain: UPF0313 protein PSPTO_4928 (771 aa).

The region spanning 371 to 649 (AYDMIRFSVN…KAFLRYHDPK (279 aa)) is the Radical SAM core domain. The [4Fe-4S] cluster site is built by Cys385, Cys389, and Cys392. The disordered stretch occupies residues 683–771 (DTYQSARRKN…KPARKPVVPR (89 aa)). 2 stretches are compositionally biased toward basic and acidic residues: residues 726 to 735 (KPWDKREEAK) and 745 to 754 (AAKERMDAAK). Residues 756–765 (GKGKGGKPAR) are compositionally biased toward basic residues.

The protein belongs to the UPF0313 family. [4Fe-4S] cluster serves as cofactor.

The protein is UPF0313 protein PSPTO_4928 of Pseudomonas syringae pv. tomato (strain ATCC BAA-871 / DC3000).